Reading from the N-terminus, the 190-residue chain is UPF0200 protein TSIB_0920 (190 aa).

7–14 (GMPGSGKG) serves as a coordination point for ATP.

The protein belongs to the UPF0200 family.

The chain is UPF0200 protein TSIB_0920 from Thermococcus sibiricus (strain DSM 12597 / MM 739).